A 327-amino-acid chain; its full sequence is Olfactory receptor 9G4 (327 aa).

At 1 to 43 (MIFPSHDSQAFTSVDMEVGNCTILTEFILLGFSADSQWQPILF) the chain is on the extracellular side. N-linked (GlcNAc...) asparagine glycosylation is present at asparagine 20. Residues 44-64 (GVFLMLYLITLSGNMTLVILI) form a helical membrane-spanning segment. Residues 65–71 (RTDSHLH) lie on the Cytoplasmic side of the membrane. The helical transmembrane segment at 72 to 92 (TPMYFFIGNLSFLDFWYTSVY) threads the bilayer. The Extracellular portion of the chain corresponds to 93 to 113 (TPKILASCVSEDKRISLAGCG). Cysteine 112 and cysteine 194 are disulfide-bonded. The helical transmembrane segment at 114–134 (AQLFFSCVVAYTECYLLAAMA) threads the bilayer. Residues 135-152 (YDRHAAICNPLLYSGTMS) are Cytoplasmic-facing. A helical membrane pass occupies residues 153 to 173 (TALCTGLVAGSYIGGFLNAIA). At 174 to 212 (HTANTFRLHFCGKNIIDHFFCDAPPLVKMSCTNTRVYEK) the chain is on the extracellular side. Residues 213 to 233 (VLLGVVGFTVLSSILAILISY) traverse the membrane as a helical segment. The Cytoplasmic portion of the chain corresponds to 234–252 (VNILLAILRIHSASGRHKA). Residues 253–273 (FSTCASHLISVMLFYGSLLFM) form a helical membrane-spanning segment. The Extracellular segment spans residues 274 to 286 (YSRPSSTYSLERD). Residues 287–307 (KVAALFYTVINPLLNPLIYSL) form a helical membrane-spanning segment. At 308–327 (RNKDIKEAFRKATQTIQPQT) the chain is on the cytoplasmic side.

Belongs to the G-protein coupled receptor 1 family.

It is found in the cell membrane. Functionally, odorant receptor. In Homo sapiens (Human), this protein is Olfactory receptor 9G4 (OR9G4).